A 997-amino-acid chain; its full sequence is Sarcoplasmic/endoplasmic reticulum calcium ATPase 2 (997 aa).

At 1–48 (MENAHTKTVEEVLGYFGVNESTGLSLEQVKKLKERWGSNELPAEEGKT) the chain is on the cytoplasmic side. Ser-38 is subject to Phosphoserine. Residues 49-69 (LLELVIEQFEDLLVRILLLAA) form a helical membrane-spanning segment. Residues 70–89 (CISFVLAWFEEGEETITAFV) are Lumenal-facing. A helical membrane pass occupies residues 90-110 (EPFVILLILVANAIVGVWQER). Over 111–253 (NAENAIEALK…QERTPLQQKL (143 aa)) the chain is Cytoplasmic. A helical membrane pass occupies residues 254 to 273 (DEFGEQLSKVISLICIAVWI). The Lumenal portion of the chain corresponds to 274–295 (INIGHFNDPVHGGSWIRGAIYY). Residues Tyr-294 and Tyr-295 each carry the 3'-nitrotyrosine modification. A helical transmembrane segment spans residues 296–313 (FKIAVALAVAAIPEGLPA). 4 residues coordinate Ca(2+): Val-304, Ala-305, Ile-307, and Glu-309. Over 314–756 (VITTCLALGT…EEGRAIYNNM (443 aa)) the chain is Cytoplasmic. Catalysis depends on Asp-351, which acts as the 4-aspartylphosphate intermediate. Mg(2+) contacts are provided by Asp-351 and Thr-353. Residue Thr-353 participates in ATP binding. The residue at position 441 (Thr-441) is a Phosphothreonine. ATP-binding residues include Glu-442, Arg-489, and Lys-514. Ser-531 carries the phosphoserine modification. Arg-559 contributes to the ATP binding site. The tract at residues 575-594 (MNLEDSANFIKYETNLTFVG) is interaction with HAX1. Phosphoserine is present on Ser-580. ATP-binding residues include Thr-624, Gly-625, and Asp-626. Ser-661 and Ser-663 each carry phosphoserine. Residues Arg-677 and Lys-683 each contribute to the ATP site. Asp-702 contributes to the Mg(2+) binding site. Position 705 (Asn-705) interacts with ATP. A helical membrane pass occupies residues 757-776 (KQFIRYLISSNVGEVVCIFL). Ca(2+) contacts are provided by Asn-767 and Glu-770. Residues 777 to 786 (TAALGFPEAL) are Lumenal-facing. Residues 787 to 807 (IPVQLLWVNLVTDGLPATALG) traverse the membrane as a helical segment. Positions 787–807 (IPVQLLWVNLVTDGLPATALG) are interaction with PLN. The segment at 788–997 (PVQLLWVNLV…RNYLEPAILE (210 aa)) is interaction with TMEM64 and PDIA3. 3 residues coordinate Ca(2+): Asn-795, Thr-798, and Asp-799. The Cytoplasmic segment spans residues 808–827 (FNPPDLDIMNKPPRNPKEPL). Residues 828–850 (ISGWLFFRYLAIGCYVGAATVGA) form a helical membrane-spanning segment. The Lumenal portion of the chain corresponds to 851-896 (AAWWFIAADGGPRVSFYQLSHFLQCKDDNPDFEGVDCAIFESPYPM). Cys-875 and Cys-887 are oxidised to a cystine. The chain crosses the membrane as a helical span at residues 897 to 916 (TMALSVLVTIEMCNALNSLS). Glu-907 contacts Ca(2+). The Cytoplasmic segment spans residues 917 to 929 (ENQSLLRMPPWEN). Residues 930–948 (IWLVGSICLSMSLHFLILY) form a helical membrane-spanning segment. The tract at residues 931-942 (WLVGSICLSMSL) is interaction with PLN. Over 949–963 (VEPLPLIFQITPLNL) the chain is Lumenal. A helical membrane pass occupies residues 964 to 984 (TQWLMVLKISLPVILMDETLK). Residues 985-997 (FVARNYLEPAILE) lie on the Cytoplasmic side of the membrane.

It belongs to the cation transport ATPase (P-type) (TC 3.A.3) family. Type IIA subfamily. As to quaternary structure, interacts with sarcolipin (SLN); the interaction inhibits ATP2A2 Ca(2+) affinity. Interacts with phospholamban (PLN); the interaction inhibits ATP2A2 Ca(2+) affinity. Interacts with myoregulin (MRLN). Interacts with ARLN and ERLN; the interactions inhibit ATP2A2 Ca(2+) affinity. Interacts with STRIT1/DWORF; the interaction results in activation of ATP2A2. Interacts with the monomeric forms of SLN, PLN, ARLN, ERLN and STRI1/DWORF. Interacts with HAX1. Interacts with S100A8 and S100A9. Interacts with SLC35G1 and STIM1. Interacts with TMEM203. Interacts with TMEM64 and PDIA3. Interacts with TMX1. Interacts with TMX2. Interacts with VMP1; VMP1 competes with PLN and SLN to prevent them from forming an inhibitory complex with ATP2A2. Interacts with ULK1. Interacts with S100A1 in a Ca(2+)-dependent manner. Interacts with TUNAR. Interacts with FLVCR2; this interaction occurs in the absence of heme and promotes ATP2A2 proteasomal degradation; this complex is dissociated upon heme binding. Interacts with FNIP1. In terms of assembly, interacts with TRAM2 (via C-terminus). Mg(2+) is required as a cofactor. In terms of processing, nitrated under oxidative stress. Nitration on the two tyrosine residues inhibits catalytic activity. Serotonylated on Gln residues by TGM2 in response to hypoxia, leading to its inactivation. In terms of tissue distribution, isoform 1 is expressed in the heart.

The protein resides in the endoplasmic reticulum membrane. It is found in the sarcoplasmic reticulum membrane. The catalysed reaction is Ca(2+)(in) + ATP + H2O = Ca(2+)(out) + ADP + phosphate + H(+). Its activity is regulated as follows. Has different conformational states with differential Ca2+ affinity. The E1 conformational state (active form) shows high Ca(2+) affinity, while the E2 state exhibits low Ca(2+) affinity. Binding of ATP allosterically increases its affinity for subsequent binding of Ca2+. Reversibly inhibited by phospholamban (PLN) at low calcium concentrations. PLN inhibits ATP2A2 Ca(2+) affinity by disrupting its allosteric activation by ATP. Inhibited by sarcolipin (SLN) and myoregulin (MRLN). The inhibition is blocked by VMP1. Enhanced by STRIT1/DWORF; STRIT1 increases activity by displacing sarcolipin (SLN), phospholamban (PLN) and myoregulin (MRLN). Stabilizes SERCA2 in its E2 state. Its function is as follows. This magnesium-dependent enzyme catalyzes the hydrolysis of ATP coupled with the translocation of calcium from the cytosol to the sarcoplasmic reticulum lumen. Involved in autophagy in response to starvation. Upon interaction with VMP1 and activation, controls ER-isolation membrane contacts for autophagosome formation. Also modulates ER contacts with lipid droplets, mitochondria and endosomes. In coordination with FLVCR2 mediates heme-stimulated switching from mitochondrial ATP synthesis to thermogenesis. Involved in the regulation of the contraction/relaxation cycle. Acts as a regulator of TNFSF11-mediated Ca(2+) signaling pathways via its interaction with TMEM64 which is critical for the TNFSF11-induced CREB1 activation and mitochondrial ROS generation necessary for proper osteoclast generation. Association between TMEM64 and SERCA2 in the ER leads to cytosolic Ca(2+) spiking for activation of NFATC1 and production of mitochondrial ROS, thereby triggering Ca(2+) signaling cascades that promote osteoclast differentiation and activation. The sequence is that of Sarcoplasmic/endoplasmic reticulum calcium ATPase 2 (ATP2A2) from Felis catus (Cat).